Reading from the N-terminus, the 72-residue chain is UPF0270 protein KPN78578_37030 (72 aa).

It belongs to the UPF0270 family.

This is UPF0270 protein KPN78578_37030 from Klebsiella pneumoniae subsp. pneumoniae (strain ATCC 700721 / MGH 78578).